The sequence spans 1088 residues: V-type proton ATPase catalytic subunit A (1088 aa).

Residue 257-264 participates in ATP binding; that stretch reads GAFGCGKT. A DOD-type homing endonuclease domain is found at 485 to 662; the sequence is LLGTWAGIGN…LVKIAHSLGI (178 aa).

It belongs to the ATPase alpha/beta chains family. In terms of assembly, V-ATPase is a heteromultimeric enzyme composed of a peripheral catalytic V1 complex (components A to H) attached to an integral membrane V0 proton pore complex (components: a, c, c', c'', d, e, f and VOA1). Post-translationally, this protein undergoes a protein self splicing that involves a post-translational excision of the VDE intervening region (intein) followed by peptide ligation.

The protein resides in the vacuole membrane. The enzyme catalyses ATP + H2O + 4 H(+)(in) = ADP + phosphate + 5 H(+)(out). Catalytic subunit of the V1 complex of vacuolar(H+)-ATPase (V-ATPase), a multisubunit enzyme composed of a peripheral complex (V1) that hydrolyzes ATP and a membrane integral complex (V0) that translocates protons. V-ATPase is responsible for acidifying and maintaining the pH of intracellular compartments. Functionally, VDE is an endonuclease that can cleave at a site present in a VMA1 allele that lacks the derived endonuclease segment of the open reading frame; cleavage at this site only occurs during meiosis and initiates 'homing', a genetic event that converts a VMA1 allele lacking VDE into one that contains it. This Candida tropicalis (Yeast) protein is V-type proton ATPase catalytic subunit A (VMA1).